We begin with the raw amino-acid sequence, 110 residues long: UPF0060 membrane protein PBPRB0495 (110 aa).

The next 4 helical transmembrane spans lie at 7–27, 33–53, 63–83, and 85–105; these read VGLF…PYLW, TIWL…LLTL, AAYG…VDGI, and PTVW…IIMF.

This sequence belongs to the UPF0060 family.

The protein localises to the cell inner membrane. This chain is UPF0060 membrane protein PBPRB0495, found in Photobacterium profundum (strain SS9).